Consider the following 258-residue polypeptide: Glycerol-3-phosphate acyltransferase (258 aa).

Helical transmembrane passes span 11-31 (IILASVIGYFLGSISWSIIIV), 62-82 (LVVAFLDALKVVFTAIVAILL), 94-114 (SYFIPCIFALIGHCYPIYYKF), 124-144 (LGLLFVVNVLYLIIFLIIWFI), 160-180 (ALIILLIMWIPYLSGVSYFIW), and 212-232 (WASGILEGNIIILIGGLILAW).

Belongs to the PlsY family. As to quaternary structure, probably interacts with PlsX.

The protein resides in the cell membrane. The catalysed reaction is an acyl phosphate + sn-glycerol 3-phosphate = a 1-acyl-sn-glycero-3-phosphate + phosphate. Its pathway is lipid metabolism; phospholipid metabolism. Catalyzes the transfer of an acyl group from acyl-phosphate (acyl-PO(4)) to glycerol-3-phosphate (G3P) to form lysophosphatidic acid (LPA). This enzyme utilizes acyl-phosphate as fatty acyl donor, but not acyl-CoA or acyl-ACP. The chain is Glycerol-3-phosphate acyltransferase from Mycoplasma mycoides subsp. mycoides SC (strain CCUG 32753 / NCTC 10114 / PG1).